The chain runs to 543 residues: CTP synthase (543 aa).

Residues 1 to 265 (MARYIFITGG…DDEVLAAFGI (265 aa)) are amidoligase domain. Ser13 is a binding site for CTP. Ser13 is a binding site for UTP. ATP is bound at residue 14–19 (SLGKGL). Tyr54 contacts L-glutamine. Residue Asp71 participates in ATP binding. Asp71 and Glu139 together coordinate Mg(2+). CTP is bound by residues 146–148 (DIE), 186–191 (KTKPTQ), and Lys222. UTP-binding positions include 186–191 (KTKPTQ) and Lys222. 238-240 (RDV) contacts ATP. Residues 291-542 (TIAIVGKYTG…IQAAVVQSRL (252 aa)) form the Glutamine amidotransferase type-1 domain. Gly353 is a binding site for L-glutamine. Cys380 (nucleophile; for glutamine hydrolysis) is an active-site residue. Residues 381–384 (FGMQ), Glu404, and Arg470 each bind L-glutamine. Residues His515 and Glu517 contribute to the active site.

The protein belongs to the CTP synthase family. Homotetramer.

The catalysed reaction is UTP + L-glutamine + ATP + H2O = CTP + L-glutamate + ADP + phosphate + 2 H(+). It catalyses the reaction L-glutamine + H2O = L-glutamate + NH4(+). The enzyme catalyses UTP + NH4(+) + ATP = CTP + ADP + phosphate + 2 H(+). It participates in pyrimidine metabolism; CTP biosynthesis via de novo pathway; CTP from UDP: step 2/2. Allosterically activated by GTP, when glutamine is the substrate; GTP has no effect on the reaction when ammonia is the substrate. The allosteric effector GTP functions by stabilizing the protein conformation that binds the tetrahedral intermediate(s) formed during glutamine hydrolysis. Inhibited by the product CTP, via allosteric rather than competitive inhibition. In terms of biological role, catalyzes the ATP-dependent amination of UTP to CTP with either L-glutamine or ammonia as the source of nitrogen. Regulates intracellular CTP levels through interactions with the four ribonucleotide triphosphates. This Bradyrhizobium sp. (strain BTAi1 / ATCC BAA-1182) protein is CTP synthase.